The primary structure comprises 301 residues: Methionyl-tRNA formyltransferase (301 aa).

109 to 112 contacts (6S)-5,6,7,8-tetrahydrofolate; the sequence is SLLP.

The protein belongs to the Fmt family.

The enzyme catalyses L-methionyl-tRNA(fMet) + (6R)-10-formyltetrahydrofolate = N-formyl-L-methionyl-tRNA(fMet) + (6S)-5,6,7,8-tetrahydrofolate + H(+). Its function is as follows. Attaches a formyl group to the free amino group of methionyl-tRNA(fMet). The formyl group appears to play a dual role in the initiator identity of N-formylmethionyl-tRNA by promoting its recognition by IF2 and preventing the misappropriation of this tRNA by the elongation apparatus. The polypeptide is Methionyl-tRNA formyltransferase (Novosphingobium aromaticivorans (strain ATCC 700278 / DSM 12444 / CCUG 56034 / CIP 105152 / NBRC 16084 / F199)).